A 159-amino-acid polypeptide reads, in one-letter code: Ribosomal RNA large subunit methyltransferase H (159 aa).

Residues Leu-76, Gly-108, and 127–132 (FSKMTF) contribute to the S-adenosyl-L-methionine site.

It belongs to the RNA methyltransferase RlmH family. Homodimer.

The protein resides in the cytoplasm. The enzyme catalyses pseudouridine(1915) in 23S rRNA + S-adenosyl-L-methionine = N(3)-methylpseudouridine(1915) in 23S rRNA + S-adenosyl-L-homocysteine + H(+). Specifically methylates the pseudouridine at position 1915 (m3Psi1915) in 23S rRNA. In Staphylococcus carnosus (strain TM300), this protein is Ribosomal RNA large subunit methyltransferase H.